The chain runs to 36 residues: Serum amyloid P-component (36 aa).

The region spanning 6-36 (SGKVFVIPMATSTSHVKLHARVSEPISAMTM) is the Pentraxin (PTX) domain.

It belongs to the pentraxin family. Homopentamer. Discoid arrangement of 5 covalently bound subunits. Ca(2+) serves as cofactor.

The protein resides in the secreted. This Salmo salar (Atlantic salmon) protein is Serum amyloid P-component.